The following is a 545-amino-acid chain: Chaperonin GroEL (545 aa).

ATP is bound by residues 30–33, lysine 51, 87–91, glycine 415, 479–481, and aspartate 495; these read TLGP, DGTTT, and NAA. The disordered stretch occupies residues 526–545; sequence KEDKPDLGNAGAGGNMGGMM. Residues 535–545 show a composition bias toward gly residues; the sequence is AGAGGNMGGMM.

Belongs to the chaperonin (HSP60) family. In terms of assembly, forms a cylinder of 14 subunits composed of two heptameric rings stacked back-to-back. Interacts with the co-chaperonin GroES.

It is found in the cytoplasm. It catalyses the reaction ATP + H2O + a folded polypeptide = ADP + phosphate + an unfolded polypeptide.. Its function is as follows. Together with its co-chaperonin GroES, plays an essential role in assisting protein folding. The GroEL-GroES system forms a nano-cage that allows encapsulation of the non-native substrate proteins and provides a physical environment optimized to promote and accelerate protein folding. The sequence is that of Chaperonin GroEL from Blochmanniella pennsylvanica (strain BPEN).